Reading from the N-terminus, the 125-residue chain is Small ribosomal subunit protein eS8 (125 aa).

Residues 1–20 form a disordered region; the sequence is MLWQGESIRKVTGGRRRPAQ.

It belongs to the eukaryotic ribosomal protein eS8 family. As to quaternary structure, part of the 30S ribosomal subunit.

The sequence is that of Small ribosomal subunit protein eS8 from Methanoregula boonei (strain DSM 21154 / JCM 14090 / 6A8).